Consider the following 166-residue polypeptide: Transcriptional repressor NrdR (166 aa).

A zinc finger lies at 3 to 34 (CPFCGFSDSRVLDSRPTVEGNSIRRRRECCGC). An ATP-cone domain is found at 49–139 (LIVVKKDGRR…VYREFRDAES (91 aa)).

It belongs to the NrdR family. The cofactor is Zn(2+).

Its function is as follows. Negatively regulates transcription of bacterial ribonucleotide reductase nrd genes and operons by binding to NrdR-boxes. This Pelotomaculum thermopropionicum (strain DSM 13744 / JCM 10971 / SI) protein is Transcriptional repressor NrdR.